Consider the following 158-residue polypeptide: Phosphopantetheine adenylyltransferase (158 aa).

Threonine 10 is a substrate binding site. ATP contacts are provided by residues 10-11 (TF) and histidine 18. 3 residues coordinate substrate: lysine 42, leucine 74, and arginine 88. ATP contacts are provided by residues 89-91 (GLR), glutamate 99, and 124-130 (YSFISSS).

It belongs to the bacterial CoaD family. As to quaternary structure, homohexamer. Mg(2+) serves as cofactor.

It is found in the cytoplasm. It carries out the reaction (R)-4'-phosphopantetheine + ATP + H(+) = 3'-dephospho-CoA + diphosphate. It functions in the pathway cofactor biosynthesis; coenzyme A biosynthesis; CoA from (R)-pantothenate: step 4/5. Reversibly transfers an adenylyl group from ATP to 4'-phosphopantetheine, yielding dephospho-CoA (dPCoA) and pyrophosphate. In Erwinia tasmaniensis (strain DSM 17950 / CFBP 7177 / CIP 109463 / NCPPB 4357 / Et1/99), this protein is Phosphopantetheine adenylyltransferase.